A 108-amino-acid chain; its full sequence is Replication restart protein PriB (108 aa).

Residues 8–108 form the SSB domain; sequence IDNSFSVMGV…LHAEQIEFID (101 aa).

This sequence belongs to the PriB family. Homodimer. Interacts with PriA and DnaT. Component of the replication restart primosome. Primosome assembly occurs via a 'hand-off' mechanism. PriA binds to replication forks, subsequently PriB then DnaT bind; DnaT then displaces ssDNA to generate the helicase loading substrate.

Functionally, involved in the restart of stalled replication forks, which reloads the replicative helicase on sites other than the origin of replication; the PriA-PriB pathway is the major replication restart pathway. During primosome assembly it facilitates complex formation between PriA and DnaT on DNA; stabilizes PriA on DNA. Stimulates the DNA unwinding activity of PriA helicase. The protein is Replication restart protein PriB of Haemophilus influenzae (strain ATCC 51907 / DSM 11121 / KW20 / Rd).